Consider the following 89-residue polypeptide: Small ribosomal subunit protein uS15 (89 aa).

It belongs to the universal ribosomal protein uS15 family. As to quaternary structure, part of the 30S ribosomal subunit. Forms a bridge to the 50S subunit in the 70S ribosome, contacting the 23S rRNA.

In terms of biological role, one of the primary rRNA binding proteins, it binds directly to 16S rRNA where it helps nucleate assembly of the platform of the 30S subunit by binding and bridging several RNA helices of the 16S rRNA. Functionally, forms an intersubunit bridge (bridge B4) with the 23S rRNA of the 50S subunit in the ribosome. This chain is Small ribosomal subunit protein uS15, found in Mycolicibacterium smegmatis (strain ATCC 700084 / mc(2)155) (Mycobacterium smegmatis).